The primary structure comprises 626 residues: tRNA uridine 5-carboxymethylaminomethyl modification enzyme MnmG (626 aa).

13–18 (GGGHAG) is a binding site for FAD. 273–287 (GPRYCPSIEDKIHRF) contributes to the NAD(+) binding site.

This sequence belongs to the MnmG family. In terms of assembly, homodimer. Heterotetramer of two MnmE and two MnmG subunits. The cofactor is FAD.

The protein localises to the cytoplasm. In terms of biological role, NAD-binding protein involved in the addition of a carboxymethylaminomethyl (cmnm) group at the wobble position (U34) of certain tRNAs, forming tRNA-cmnm(5)s(2)U34. In Acinetobacter baumannii (strain AYE), this protein is tRNA uridine 5-carboxymethylaminomethyl modification enzyme MnmG.